Here is a 263-residue protein sequence, read N- to C-terminus: uncharacterized protein (263 aa).

Residue 31-38 (GPTGSGKT) coordinates ATP.

Belongs to the CbbQ/NirQ/NorQ/GpvN family.

This is an uncharacterized protein from Staphylococcus aureus (strain NCTC 8325 / PS 47).